The chain runs to 214 residues: 3-isopropylmalate dehydratase small subunit (214 aa).

It belongs to the LeuD family. LeuD type 1 subfamily. As to quaternary structure, heterodimer of LeuC and LeuD.

The catalysed reaction is (2R,3S)-3-isopropylmalate = (2S)-2-isopropylmalate. The protein operates within amino-acid biosynthesis; L-leucine biosynthesis; L-leucine from 3-methyl-2-oxobutanoate: step 2/4. Catalyzes the isomerization between 2-isopropylmalate and 3-isopropylmalate, via the formation of 2-isopropylmaleate. This chain is 3-isopropylmalate dehydratase small subunit, found in Methylobacillus flagellatus (strain ATCC 51484 / DSM 6875 / VKM B-1610 / KT).